A 583-amino-acid chain; its full sequence is Exonuclease 3'-5' domain-containing protein 2 (583 aa).

Residues 1-11 (MTRESAVATKR) are Mitochondrial intermembrane-facing. The chain crosses the membrane as a helical span at residues 12-29 (NWAILAAGVGLVYVLVRH). Over 30 to 583 (RHRLLCPLRR…AGLDAKIKET (554 aa)) the chain is Cytoplasmic. In terms of domain architecture, 3'-5' exonuclease spans 62 to 228 (TTQWVLNELK…AIYQKLCRDL (167 aa)). Positions 83, 85, and 213 each coordinate a divalent metal cation. A compositionally biased stretch (polar residues) spans 266–281 (GSGVTRSKGSTQSKSN). The interval 266 to 286 (GSGVTRSKGSTQSKSNKWVPK) is disordered.

This sequence belongs to the EXD2 family. Homodimer. It depends on Mg(2+) as a cofactor. Mn(2+) is required as a cofactor.

The protein resides in the mitochondrion membrane. Functionally, 3'-5' exoribonuclease required for mitochondrial metabolism. The chain is Exonuclease 3'-5' domain-containing protein 2 from Drosophila melanogaster (Fruit fly).